A 350-amino-acid polypeptide reads, in one-letter code: Arginine N-succinyltransferase (350 aa).

Residue leucine 125 participates in succinyl-CoA binding. Histidine 229 serves as the catalytic Proton donor.

Belongs to the arginine N-succinyltransferase family.

The catalysed reaction is succinyl-CoA + L-arginine = N(2)-succinyl-L-arginine + CoA + H(+). Its pathway is amino-acid degradation; L-arginine degradation via AST pathway; L-glutamate and succinate from L-arginine: step 1/5. Functionally, catalyzes the transfer of succinyl-CoA to arginine to produce N(2)-succinylarginine. This chain is Arginine N-succinyltransferase, found in Yersinia pestis.